Consider the following 139-residue polypeptide: Transmembrane protein 250 (139 aa).

The next 2 helical transmembrane spans lie at 56 to 76 and 116 to 136; these read FLLYFSCSLFTAALWGALAAL and VYGIHVTMLLVGGLGWCFMVF.

In terms of assembly, (Microbial infection) Interacts with herpes simplex virus 1/HHV-1 protein CVC2/UL25.

It localises to the membrane. The protein localises to the nucleus. The protein resides in the cytoplasm. Its function is as follows. May play a role in cell proliferation by promoting progression into S phase. (Microbial infection) Promotes human herpes simplex virus 1/HHV-1 proliferation. The polypeptide is Transmembrane protein 250 (Homo sapiens (Human)).